Reading from the N-terminus, the 205-residue chain is Holliday junction branch migration complex subunit RuvA (205 aa).

A domain I region spans residues 1 to 64; that stretch reads MIGRLRGVLI…EDAQLLYGFI (64 aa). The tract at residues 65–143 is domain II; it reads TKKERSLFRL…SLMEASVGSE (79 aa). The segment at 144-156 is flexible linker; the sequence is REFVLQSNYSPAP. Positions 157–205 are domain III; that stretch reads TVNSAEEDAISALLSLGYKPPQASKAVSAAYKEGMDSETLIKAALKSML.

The protein belongs to the RuvA family. In terms of assembly, homotetramer. Forms an RuvA(8)-RuvB(12)-Holliday junction (HJ) complex. HJ DNA is sandwiched between 2 RuvA tetramers; dsDNA enters through RuvA and exits via RuvB. An RuvB hexamer assembles on each DNA strand where it exits the tetramer. Each RuvB hexamer is contacted by two RuvA subunits (via domain III) on 2 adjacent RuvB subunits; this complex drives branch migration. In the full resolvosome a probable DNA-RuvA(4)-RuvB(12)-RuvC(2) complex forms which resolves the HJ.

Its subcellular location is the cytoplasm. In terms of biological role, the RuvA-RuvB-RuvC complex processes Holliday junction (HJ) DNA during genetic recombination and DNA repair, while the RuvA-RuvB complex plays an important role in the rescue of blocked DNA replication forks via replication fork reversal (RFR). RuvA specifically binds to HJ cruciform DNA, conferring on it an open structure. The RuvB hexamer acts as an ATP-dependent pump, pulling dsDNA into and through the RuvAB complex. HJ branch migration allows RuvC to scan DNA until it finds its consensus sequence, where it cleaves and resolves the cruciform DNA. This chain is Holliday junction branch migration complex subunit RuvA, found in Shewanella sp. (strain MR-4).